Reading from the N-terminus, the 418-residue chain is tRNA-2-methylthio-N(6)-dimethylallyladenosine synthase (418 aa).

Positions 1–118 (MNYLIETIGC…ALKIMNLFRT (118 aa)) constitute an MTTase N-terminal domain. [4Fe-4S] cluster is bound by residues cysteine 10, cysteine 46, cysteine 80, cysteine 143, cysteine 147, and cysteine 150. Residues 129–356 (IKSKIVRYIT…LKESNKISIE (228 aa)) enclose the Radical SAM core domain. Positions 359-418 (SEMLGSTQQVLAEEIKNGIIKARTKNGRKVFAEGRKEYIGKHINVNIKEAKINSLFGDIV) constitute a TRAM domain.

This sequence belongs to the methylthiotransferase family. MiaB subfamily. As to quaternary structure, monomer. Requires [4Fe-4S] cluster as cofactor.

Its subcellular location is the cytoplasm. The catalysed reaction is N(6)-dimethylallyladenosine(37) in tRNA + (sulfur carrier)-SH + AH2 + 2 S-adenosyl-L-methionine = 2-methylsulfanyl-N(6)-dimethylallyladenosine(37) in tRNA + (sulfur carrier)-H + 5'-deoxyadenosine + L-methionine + A + S-adenosyl-L-homocysteine + 2 H(+). Functionally, catalyzes the methylthiolation of N6-(dimethylallyl)adenosine (i(6)A), leading to the formation of 2-methylthio-N6-(dimethylallyl)adenosine (ms(2)i(6)A) at position 37 in tRNAs that read codons beginning with uridine. The chain is tRNA-2-methylthio-N(6)-dimethylallyladenosine synthase from Endomicrobium trichonymphae.